The following is a 361-amino-acid chain: Alanine racemase (361 aa).

K35 acts as the Proton acceptor; specific for D-alanine in catalysis. The residue at position 35 (K35) is an N6-(pyridoxal phosphate)lysine. Position 130 (R130) interacts with substrate. Y257 functions as the Proton acceptor; specific for L-alanine in the catalytic mechanism. M305 provides a ligand contact to substrate.

It belongs to the alanine racemase family. Pyridoxal 5'-phosphate serves as cofactor.

It carries out the reaction L-alanine = D-alanine. It participates in amino-acid biosynthesis; D-alanine biosynthesis; D-alanine from L-alanine: step 1/1. Catalyzes the interconversion of L-alanine and D-alanine. May also act on other amino acids. The protein is Alanine racemase (alr) of Nitrosomonas eutropha (strain DSM 101675 / C91 / Nm57).